Here is a 502-residue protein sequence, read N- to C-terminus: N-fatty-acyl-amino acid synthase/hydrolase PM20D1 (502 aa).

Residues 1–25 form the signal peptide; sequence MAQRCVCVLALVAMLLLVFPTVSRS. Residue H125 coordinates Zn(2+). D127 is an active-site residue. D157 contributes to the Zn(2+) binding site. The active-site Proton acceptor is E191. Residues E192 and D217 each contribute to the Zn(2+) site. An N-linked (GlcNAc...) asparagine glycan is attached at N252. H464 provides a ligand contact to Zn(2+).

Belongs to the peptidase M20A family. It depends on Zn(2+) as a cofactor.

Its subcellular location is the secreted. The enzyme catalyses an N-acyl-L-amino acid + H2O = an L-alpha-amino acid + a carboxylate. It carries out the reaction an N-acyl-aromatic L-alpha-amino acid + H2O = an aromatic L-alpha-amino acid + a carboxylate. It catalyses the reaction L-phenylalanine + (9Z)-octadecenoate = N-(9Z-octadecenoyl)-L-phenylalanine + H2O. The catalysed reaction is N-(9Z-octadecenoyl)-L-leucine + H2O = L-leucine + (9Z)-octadecenoate. The enzyme catalyses N-(5Z,8Z,11Z,14Z)-eicosatetraenoyl-glycine + H2O = (5Z,8Z,11Z,14Z)-eicosatetraenoate + glycine. It carries out the reaction N-hexadecanoyl-L-phenylalanine + H2O = hexadecanoate + L-phenylalanine. It catalyses the reaction N-octadecanoyl-L-phenylalanine + H2O = octadecanoate + L-phenylalanine. The catalysed reaction is N-(4Z,7Z,10Z,13Z,16Z,19Z-docosahexaenoyl)-L-phenylalanine + H2O = (4Z,7Z,10Z,13Z,16Z,19Z)-docosahexaenoate + L-phenylalanine. The enzyme catalyses N-(9Z-octadecenoyl)-L-asparagine + H2O = L-asparagine + (9Z)-octadecenoate. It carries out the reaction (9Z)-octadecenoate + glycine = N-(9Z-octadecenoyl)glycine + H2O. It catalyses the reaction N-(9Z-octadecenoyl)-L-lysine + H2O = L-lysine + (9Z)-octadecenoate. The catalysed reaction is N-(9Z-octadecenoyl)-L-methionine + H2O = (9Z)-octadecenoate + L-methionine. The enzyme catalyses N-(9Z-octadecenoyl)-L-serine + H2O = L-serine + (9Z)-octadecenoate. It carries out the reaction N-(9Z-octadecenoyl)-L-tryptophan + H2O = L-tryptophan + (9Z)-octadecenoate. It catalyses the reaction N-(9Z-octadecenoyl)-L-tyrosine + H2O = L-tyrosine + (9Z)-octadecenoate. The catalysed reaction is N-(9Z-octadecenoyl)-L-glutamine + H2O = L-glutamine + (9Z)-octadecenoate. The enzyme catalyses N-(5Z,8Z,11Z,14Z-eicosatetraenoyl)-L-serine + H2O = (5Z,8Z,11Z,14Z)-eicosatetraenoate + L-serine. It carries out the reaction (5Z,8Z,11Z,14Z)-eicosatetraenoate + L-phenylalanine = N-(5Z,8Z,11Z,14Z-eicosatetraenoyl)-L-phenylalanine + H2O. It functions in the pathway amino-acid metabolism. It participates in energy metabolism. Its pathway is lipid metabolism; fatty acid metabolism. With respect to regulation, lipoproteins are powerful coactivators of PM20D1 activity in vitro and NAA biosynthesis in vivo. Its function is as follows. Secreted enzyme that regulates the endogenous N-fatty acyl amino acid (NAAs) tissue and circulating levels by functioning as a bidirectional NAA synthase/hydrolase. It condenses free fatty acids and free amino acids to generate NAAs and bidirectionally catalyzes the reverse hydrolysis reaction. Some of these NAAs stimulate oxidative metabolism via mitochondrial uncoupling, increasing energy expenditure in a UPC1-independent manner. Thereby, this secreted protein may indirectly regulate whole body energy expenditure. PM20D1 circulates in tight association with both low- and high-density (LDL and HDL,respectively) lipoprotein particles. In Homo sapiens (Human), this protein is N-fatty-acyl-amino acid synthase/hydrolase PM20D1.